The sequence spans 145 residues: AN1-type zinc finger protein 2A (145 aa).

2 AN1-type zinc fingers span residues 4–52 (PDLG…QKDV) and 94–142 (KIFT…RPTI). Zn(2+)-binding residues include Cys-10, Cys-15, Cys-25, Cys-28, Cys-33, His-36, His-42, Cys-44, Cys-100, Cys-105, Cys-115, Cys-118, Cys-123, His-126, His-132, and Cys-134.

Its subcellular location is the cytoplasm. The protein resides in the nucleus. This Homo sapiens (Human) protein is AN1-type zinc finger protein 2A (ZFAND2A).